Here is a 456-residue protein sequence, read N- to C-terminus: ACT domain-containing protein ACR5 (456 aa).

ACT domains are found at residues 39–115, 130–207, 271–347, and 349–432; these read VIKV…FSPS, VVEL…SSGR, IVMI…VSEG, and KLEL…PSPQ.

As to expression, expressed in stems and siliques.

Its function is as follows. May bind amino acids. The chain is ACT domain-containing protein ACR5 from Arabidopsis thaliana (Mouse-ear cress).